The chain runs to 232 residues: 7-cyano-7-deazaguanine synthase 2 (232 aa).

9–19 (FSGGQDSTTCL) is a binding site for ATP. Residues Cys-189, Cys-198, Cys-201, and Cys-204 each contribute to the Zn(2+) site.

The protein belongs to the QueC family. Zn(2+) is required as a cofactor.

The enzyme catalyses 7-carboxy-7-deazaguanine + NH4(+) + ATP = 7-cyano-7-deazaguanine + ADP + phosphate + H2O + H(+). Its pathway is purine metabolism; 7-cyano-7-deazaguanine biosynthesis. In terms of biological role, catalyzes the ATP-dependent conversion of 7-carboxy-7-deazaguanine (CDG) to 7-cyano-7-deazaguanine (preQ(0)). The protein is 7-cyano-7-deazaguanine synthase 2 of Pseudomonas fluorescens (strain ATCC BAA-477 / NRRL B-23932 / Pf-5).